The chain runs to 290 residues: D-tagatose-1,6-bisphosphate aldolase subunit KbaY (290 aa).

The active-site Proton donor is Asp-82. Positions 83 and 180 each coordinate Zn(2+). Gly-181 contributes to the dihydroxyacetone phosphate binding site. His-208 lines the Zn(2+) pocket. Residues Gly-209–Ser-211 and Asn-230–Thr-233 each bind dihydroxyacetone phosphate.

The protein belongs to the class II fructose-bisphosphate aldolase family. TagBP aldolase KbaY subfamily. In terms of assembly, homotetramer. Forms a complex with KbaZ. Zn(2+) serves as cofactor.

The catalysed reaction is D-tagatofuranose 1,6-bisphosphate = D-glyceraldehyde 3-phosphate + dihydroxyacetone phosphate. It functions in the pathway carbohydrate metabolism; D-tagatose 6-phosphate degradation; D-glyceraldehyde 3-phosphate and glycerone phosphate from D-tagatose 6-phosphate: step 2/2. Catalytic subunit of the tagatose-1,6-bisphosphate aldolase KbaYZ, which catalyzes the reversible aldol condensation of dihydroxyacetone phosphate (DHAP or glycerone-phosphate) with glyceraldehyde 3-phosphate (G3P) to produce tagatose 1,6-bisphosphate (TBP). Requires KbaZ subunit for full activity and stability. The sequence is that of D-tagatose-1,6-bisphosphate aldolase subunit KbaY from Citrobacter koseri (strain ATCC BAA-895 / CDC 4225-83 / SGSC4696).